Reading from the N-terminus, the 1194-residue chain is Immunoglobulin superfamily member 3 (1194 aa).

The first 19 residues, 1-19, serve as a signal peptide directing secretion; sequence MKCFFPVLSCLAVLGVVSA. Ig-like C2-type domains are found at residues 20 to 138, 143 to 262, 276 to 386, 401 to 539, 545 to 661, 676 to 803, 813 to 945, and 949 to 1097; these read QRQV…AKMN, PDSL…WYAM, PTDK…KTVT, PIIV…ISIT, FAVT…WTRL, PVTK…EEVS, PDSR…TALT, and PDAS…YRLT. At 20–1124 the chain is on the extracellular side; it reads QRQVTVQEGP…LQSIICSNDA (1105 aa). Cystine bridges form between cysteine 42/cysteine 120 and cysteine 167/cysteine 246. Residue asparagine 43 is glycosylated (N-linked (GlcNAc...) asparagine). Positions 250 to 252 match the EWI motif motif; that stretch reads EWI. Cysteine 302 and cysteine 376 are joined by a disulfide. Residue asparagine 418 is glycosylated (N-linked (GlcNAc...) asparagine). Disulfide bonds link cysteine 432-cysteine 511 and cysteine 566-cysteine 645. Residue asparagine 655 is glycosylated (N-linked (GlcNAc...) asparagine). Disulfide bonds link cysteine 701-cysteine 782, cysteine 838-cysteine 918, and cysteine 974-cysteine 1080. N-linked (GlcNAc...) asparagine glycosylation occurs at asparagine 842. The segment at 997 to 1033 is disordered; it reads AGGKRSSPGLEEQEEEREEEEEEDDDDDDDPTERTAL. Positions 1007 to 1027 are enriched in acidic residues; sequence EEQEEEREEEEEEDDDDDDDP. N-linked (GlcNAc...) asparagine glycosylation occurs at asparagine 1077. The chain crosses the membrane as a helical span at residues 1125-1145; that stretch reads LFYFVFFYPFPIFGILIITIL. Over 1146-1194 the chain is Cytoplasmic; it reads LVRFKSRNSSKNSDGKNGVPLLWIKEPHLNYSPTCLEPPVLSIHPGAID.

In terms of tissue distribution, expressed in a wide range of tissues with High expression in Placenta, kidney and lung.

It is found in the membrane. This is Immunoglobulin superfamily member 3 (IGSF3) from Homo sapiens (Human).